The following is a 231-amino-acid chain: Large ribosomal subunit protein uL1 (231 aa).

This sequence belongs to the universal ribosomal protein uL1 family. Part of the 50S ribosomal subunit.

In terms of biological role, binds directly to 23S rRNA. The L1 stalk is quite mobile in the ribosome, and is involved in E site tRNA release. Protein L1 is also a translational repressor protein, it controls the translation of the L11 operon by binding to its mRNA. The protein is Large ribosomal subunit protein uL1 of Thioalkalivibrio sulfidiphilus (strain HL-EbGR7).